We begin with the raw amino-acid sequence, 71 residues long: Small ribosomal subunit protein bS21 (71 aa).

This sequence belongs to the bacterial ribosomal protein bS21 family.

In Wigglesworthia glossinidia brevipalpis, this protein is Small ribosomal subunit protein bS21.